A 368-amino-acid chain; its full sequence is Peptide chain release factor 2 (368 aa).

N5-methylglutamine is present on Gln250.

The protein belongs to the prokaryotic/mitochondrial release factor family. Post-translationally, methylated by PrmC. Methylation increases the termination efficiency of RF2.

The protein localises to the cytoplasm. In terms of biological role, peptide chain release factor 2 directs the termination of translation in response to the peptide chain termination codons UGA and UAA. The chain is Peptide chain release factor 2 from Chlamydia trachomatis serovar L2b (strain UCH-1/proctitis).